Consider the following 152-residue polypeptide: Transcriptional regulator MraZ (152 aa).

SpoVT-AbrB domains follow at residues 5–52 and 81–124; these read ASAI…PLHE and AQDC…EESA.

It belongs to the MraZ family. In terms of assembly, forms oligomers.

Its subcellular location is the cytoplasm. It is found in the nucleoid. In Shewanella frigidimarina (strain NCIMB 400), this protein is Transcriptional regulator MraZ.